The chain runs to 333 residues: Ribosomal RNA small subunit methyltransferase H (333 aa).

Residues 34-36 (GGH), D59, F86, D112, and Q119 each bind S-adenosyl-L-methionine.

Belongs to the methyltransferase superfamily. RsmH family.

It is found in the cytoplasm. The catalysed reaction is cytidine(1402) in 16S rRNA + S-adenosyl-L-methionine = N(4)-methylcytidine(1402) in 16S rRNA + S-adenosyl-L-homocysteine + H(+). Specifically methylates the N4 position of cytidine in position 1402 (C1402) of 16S rRNA. The sequence is that of Ribosomal RNA small subunit methyltransferase H from Prosthecochloris aestuarii (strain DSM 271 / SK 413).